Consider the following 256-residue polypeptide: Type III pantothenate kinase (256 aa).

6-13 lines the ATP pocket; it reads DVGNTNTV. Substrate contacts are provided by residues Tyr-100 and 107 to 110; that span reads GADR. The active-site Proton acceptor is the Asp-109. A K(+)-binding site is contributed by Asp-129. Thr-132 contacts ATP. Thr-184 is a substrate binding site.

The protein belongs to the type III pantothenate kinase family. Homodimer. NH4(+) is required as a cofactor. Requires K(+) as cofactor.

Its subcellular location is the cytoplasm. It catalyses the reaction (R)-pantothenate + ATP = (R)-4'-phosphopantothenate + ADP + H(+). The protein operates within cofactor biosynthesis; coenzyme A biosynthesis; CoA from (R)-pantothenate: step 1/5. In terms of biological role, catalyzes the phosphorylation of pantothenate (Pan), the first step in CoA biosynthesis. The sequence is that of Type III pantothenate kinase from Myxococcus xanthus (strain DK1622).